A 257-amino-acid polypeptide reads, in one-letter code: tRNA (guanine-N(7)-)-methyltransferase (257 aa).

A disordered region spans residues 1 to 58; it reads MQPIEQPGTGPDDITPESQDTNTAESAESGAETGHPRRIRSFVRRAGRTSTGQQRAIN. Residues 16–26 show a composition bias toward polar residues; sequence PESQDTNTAES. Positions 36 to 47 are enriched in basic residues; the sequence is PRRIRSFVRRAG. Glutamate 89, glutamate 114, aspartate 141, and aspartate 164 together coordinate S-adenosyl-L-methionine. The active site involves aspartate 164. Lysine 168 contacts substrate. An interaction with RNA region spans residues 170–175; that stretch reads RHNKRR. Substrate-binding positions include aspartate 200 and 235 to 238; that span reads TKFE.

The protein belongs to the class I-like SAM-binding methyltransferase superfamily. TrmB family.

The catalysed reaction is guanosine(46) in tRNA + S-adenosyl-L-methionine = N(7)-methylguanosine(46) in tRNA + S-adenosyl-L-homocysteine. Its pathway is tRNA modification; N(7)-methylguanine-tRNA biosynthesis. In terms of biological role, catalyzes the formation of N(7)-methylguanine at position 46 (m7G46) in tRNA. This is tRNA (guanine-N(7)-)-methyltransferase from Ralstonia pickettii (strain 12J).